We begin with the raw amino-acid sequence, 414 residues long: Ankyrin repeat domain-containing protein 10 (414 aa).

5 ANK repeats span residues 18-47 (TLRF…RSDL), 54-83 (YGWT…SVNA), 88-117 (FAQT…NINK), 121-150 (VGET…QIDL), and 154-187 (SGLT…RYYS). Residues 310–332 (GVTSPSRHRIHTSNGTEEPEKAM) form a disordered region.

The polypeptide is Ankyrin repeat domain-containing protein 10 (ANKRD10) (Gallus gallus (Chicken)).